Here is a 149-residue protein sequence, read N- to C-terminus: Nucleoside diphosphate kinase (149 aa).

ATP contacts are provided by K9, F57, R85, T91, R102, and N112. H115 acts as the Pros-phosphohistidine intermediate in catalysis.

The protein belongs to the NDK family. In terms of assembly, homotetramer. Requires Mg(2+) as cofactor.

The protein resides in the cytoplasm. The enzyme catalyses a 2'-deoxyribonucleoside 5'-diphosphate + ATP = a 2'-deoxyribonucleoside 5'-triphosphate + ADP. It catalyses the reaction a ribonucleoside 5'-diphosphate + ATP = a ribonucleoside 5'-triphosphate + ADP. Major role in the synthesis of nucleoside triphosphates other than ATP. The ATP gamma phosphate is transferred to the NDP beta phosphate via a ping-pong mechanism, using a phosphorylated active-site intermediate. This chain is Nucleoside diphosphate kinase, found in Trichodesmium erythraeum (strain IMS101).